An 84-amino-acid polypeptide reads, in one-letter code: uncharacterized protein (84 aa).

Helical transmembrane passes span 8–28, 30–50, and 63–83; these read IYFF…VNLL, INVI…ISTI, and VLFM…LYIP.

It is found in the cell membrane. This is an uncharacterized protein from Methanocaldococcus jannaschii (strain ATCC 43067 / DSM 2661 / JAL-1 / JCM 10045 / NBRC 100440) (Methanococcus jannaschii).